A 449-amino-acid polypeptide reads, in one-letter code: uncharacterized protein (449 aa).

Disordered stretches follow at residues Met-1–Ser-58 and Glu-71–Leu-125. Positions Lys-30 to Ser-46 are enriched in basic and acidic residues. A compositionally biased stretch (acidic residues) spans Ser-103–Glu-124.

This sequence belongs to the bystin family.

This is an uncharacterized protein from Caenorhabditis elegans.